The primary structure comprises 648 residues: Protein teflon (648 aa).

The C2H2-type 1 zinc finger occupies 33 to 56; that stretch reads LYCHFCRDLFTQLPEFLRHLQGAH. 2 disordered regions span residues 76-127 and 146-170; these read SGEQ…GSQN and EHINDKLKPENGGFKGPRKKANSES. A compositionally biased stretch (polar residues) spans 85–94; the sequence is VGHNSSSSDS. Residues 96–107 are compositionally biased toward basic and acidic residues; it reads GLAKSEDSRATE. The C2H2-type 2; degenerate zinc-finger motif lies at 598-620; the sequence is YFCKCCDDIFTLNEDYIRHLVSQ. Residues 624–647 form a C2H2-type 3 zinc finger; the sequence is YQCTKCIKTFKYQGHYDKHMRTVH.

Belongs to the Teflon family.

It is found in the nucleus. The protein resides in the chromosome. Specifically required in males for proper segregation of autosomal bivalents at meiosis I. Expression is required in the male germ line prior to spermatocyte stage S4. May have a role as a bridging molecule maintaining adhesion to hold autosome bivalents together via heterochromatic connections. The sequence is that of Protein teflon from Drosophila yakuba (Fruit fly).